Here is an 834-residue protein sequence, read N- to C-terminus: Transcription intermediary factor 1-beta (834 aa).

An N-acetylalanine modification is found at Ala2. The span at 13 to 23 (AATAASAASGS) shows a compositional bias: low complexity. Residues 13–56 (AATAASAASGSPGSGEGSAGGEKRPAASSAAAASAAASSPAGGG) are disordered. Residues Ser23, Ser26, and Ser30 each carry the phosphoserine modification. A Glycyl lysine isopeptide (Lys-Gly) (interchain with G-Cter in SUMO2) cross-link involves residue Lys35. Over residues 38–52 (AASSAAAASAAASSP) the composition is skewed to low complexity. Ser51 carries the post-translational modification Phosphoserine. The segment at 66-122 (CGVCRERLRPERDPRLLPCLHSACSACLGPATPAAANNSGDGGSAGDGAMVDCPVCK) adopts an RING-type zinc-finger fold. Residue Lys128 forms a Glycyl lysine isopeptide (Lys-Gly) (interchain with G-Cter in SUMO2) linkage. Ser139 carries the phosphoserine modification. Residues 149-196 (DANQCCTSCEDNAPATSYCVECSEPLCETCVEAHQRVKYTKDHTVRST) form a B box-type 1 zinc finger. The Zn(2+) site is built by Cys154, Cys157, Cys178, and His182. Lys200 is covalently cross-linked (Glycyl lysine isopeptide (Lys-Gly) (interchain with G-Cter in SUMO2)). The segment at 205–246 (ERTVYCNVHKHEPLVLFCESCDTLTCRDCQLNAHKDHQYQFL) adopts a B box-type 2 zinc-finger fold. Cys210, His213, Cys233, and His238 together coordinate Zn(2+). Positions 247–377 (EDAVRNQRKL…LIYFQLHRAL (131 aa)) are leucine zipper alpha helical coiled-coil region. Positions 248–377 (DAVRNQRKLL…LIYFQLHRAL (130 aa)) are interaction with MAGEC2. Residues Lys255 and Lys262 each participate in a glycyl lysine isopeptide (Lys-Gly) (interchain with G-Cter in SUMO2) cross-link. Lys267 is modified (N6-acetyllysine). Lys273 is covalently cross-linked (Glycyl lysine isopeptide (Lys-Gly) (interchain with G-Cter in SUMO2)). Lys305 is subject to N6-acetyllysine; alternate. A Glycyl lysine isopeptide (Lys-Gly) (interchain with G-Cter in SUMO2); alternate cross-link involves residue Lys305. Lys320 is covalently cross-linked (Glycyl lysine isopeptide (Lys-Gly) (interchain with G-Cter in SUMO2)). Residue Lys341 is modified to N6-acetyllysine. A Glycyl lysine isopeptide (Lys-Gly) (interchain with G-Cter in SUMO2) cross-link involves residue Lys367. Positions 367–371 (KLIYF) are involved in binding PPP1CA. Lys378 carries the N6-acetyllysine; alternate modification. Residue Lys378 forms a Glycyl lysine isopeptide (Lys-Gly) (interchain with G-Cter in SUMO2); alternate linkage. Residue Lys378 forms a Glycyl lysine isopeptide (Lys-Gly) (interchain with G-Cter in SUMO1); alternate linkage. A Glycyl lysine isopeptide (Lys-Gly) (interchain with G-Cter in SUMO2) cross-link involves residue Lys408. The tract at residues 412-480 (ERPGTNSTGP…SRSGEGEVSG (69 aa)) is disordered. Ser418 is modified (phosphoserine). A Glycyl lysine isopeptide (Lys-Gly) (interchain with G-Cter in SUMO2) cross-link involves residue Lys435. A compositionally biased stretch (polar residues) spans 435 to 444 (KQGSGSSQPM). Phosphoserine is present on residues Ser438, Ser440, and Ser454. A Glycyl lysine isopeptide (Lys-Gly) (interchain with G-Cter in SUMO2); alternate cross-link involves residue Lys469. A Glycyl lysine isopeptide (Lys-Gly) (interchain with G-Cter in SUMO1); alternate cross-link involves residue Lys469. Arg470 carries the citrulline modification. Ser471 is subject to Phosphoserine. Arg472 is modified (citrulline). Phosphoserine occurs at positions 473, 479, and 489. The HP1 box stretch occupies residues 476–513 (GEVSGLLRKVPRVSLERLDLDLTSDSQPPVFKVFPGST). The PxVxL motif signature appears at 481-494 (LLRKVPRVSLERLD). Position 498 is a phosphothreonine (Thr498). Ser501 carries the post-translational modification Phosphoserine. Residue Lys507 forms a Glycyl lysine isopeptide (Lys-Gly) (interchain with G-Cter in SUMO2) linkage. A Glycyl lysine isopeptide (Lys-Gly) (interchain with G-Cter in SUMO2); alternate cross-link involves residue Lys554. Lys554 participates in a covalent cross-link: Glycyl lysine isopeptide (Lys-Gly) (interchain with G-Cter in SUMO); alternate. Residue Lys575 forms a Glycyl lysine isopeptide (Lys-Gly) (interchain with G-Cter in SUMO2) linkage. A disordered region spans residues 581–602 (LTEGPGAEGPRLASPSGSTSSG). Ser594 carries the post-translational modification Phosphoserine. Residues 625 to 672 (ATICRVCQKPGDLVMCNQCEFCFHLDCHLPALQDVPGEEWSCSLCHVL) form a PHD-type zinc finger. Lys676 participates in a covalent cross-link: Glycyl lysine isopeptide (Lys-Gly) (interchain with G-Cter in SUMO). A phosphoserine mark is found at Ser683, Ser689, and Ser697. Positions 695 to 799 (KLSPANQRKC…RFFETRMNDA (105 aa)) constitute a Bromo domain. A Glycyl lysine isopeptide (Lys-Gly) (interchain with G-Cter in SUMO2); alternate cross-link involves residue Lys750. Lys750 is covalently cross-linked (Glycyl lysine isopeptide (Lys-Gly) (interchain with G-Cter in SUMO1); alternate). A Glycyl lysine isopeptide (Lys-Gly) (interchain with G-Cter in SUMO); alternate cross-link involves residue Lys750. Ser752 bears the Phosphoserine mark. Tyr755 is subject to Phosphotyrosine. Ser757 bears the Phosphoserine mark. Residues Lys770, Lys774, and Lys779 each carry the N6-acetyllysine; alternate modification. Glycyl lysine isopeptide (Lys-Gly) (interchain with G-Cter in SUMO2); alternate cross-links involve residues Lys770, Lys774, and Lys779. A Glycyl lysine isopeptide (Lys-Gly) (interchain with G-Cter in SUMO1); alternate cross-link involves residue Lys779. Residue Ser784 is modified to Phosphoserine. Lys804 is covalently cross-linked (Glycyl lysine isopeptide (Lys-Gly) (interchain with G-Cter in SUMO2)). Ser824 bears the Phosphoserine; by ATM and ATR and dsDNA kinase mark.

It belongs to the TRIM/RBCC family. Oligomer; the RBCC domain homotrimerizes and interacts with one molecule of KRAB to form the KRAB-KAP1 corepressor complex. Interacts with SETX. Binding to a KRAB domain is an absolute requirement for silencing gene expression. Interacts with a number of KRAB-ZFP proteins including ZNF10, ZFP53, ZFP68, ZNF382 and ZNF256. Interacts with NCOR1, NR3C1 and CHD3. Interacts with CEBPB (via the RING-type and PHD-type zinc fingers). Interacts with CBX5 (via the PxVxL motif); the interaction occurs in interphase nuclei and competes for binding POGZ. Interacts with POGZ; the interaction competes for interaction with CBX5. Interacts with SETDB1; the interaction is enhanced by KAP1 sumoylation, stimulates SETDB1 histone methyltransferase activity and gene silencing. Interacts (via the PHD-type zinc finger) with UBE2I; the interaction is required for sumoylation and repressor activity. Component of the TRIM28/KAP1-ERBB4-MDM2 complex involved in connecting growth factor and DNA damage responses. Interacts directly with ERBB4; the interaction represses ERBB4-mediated transcription activity. Interacts with MDM2; the interaction contributes to p53/TP53 inactivation. Component of the TRIM28/KAP1-MDM2-p53/TP53; involved in regulating p53/TP53 stabilization and activity. Interacts (via the leucine zipper alpha helical coiled-coil) with E2F1 (central region); the interaction inhibits E2F1 acetylation and transcriptional activity. Interacts with PPP1CA; the interaction dephosphorylates TRIM28 at Ser-824 and forms a complex at the p21 promoter site. Interacts with PPP1CB; the interaction is weak but is increased on dephosphorylation at Ser-824. Interacts with CEBPB and NR3C1. Interacts with CBX5 (via the PxVxL motif); the interaction occurs in interphase nuclei and competes for binding POGZ. Component of a ternary complex that includes TRIM28, a HP1 protein (CBX1, CBX3 OR CBX5), a KRAB domain-containing protein, and DNA. Interacts with SMARCAD1. Interacts with, and sumoylates IRF7. Interacts with MAGEC2. Part of a complex composed of TRIM28, HDAC1, HDAC2 and EHMT2. Interacts (via the RBCC domain) with KOX1 (via the KRAB domain), ZNF268 (via the KRAB domain) and ZNF300 (via the KRAB domain); the interactions increase KOX1, ZNF268 and ZNF300 nuclear localization activities. Interacts with AICDA. The large PER complex involved in the histone methylation is composed of at least PER2, CBX3, TRIM28, SUV39H1 and/or SUV39H2; CBX3 mediates the formation of the complex. Interacts with NR4A3; the interactions potentiates NR4A3 activity on NurRE promoter. Interacts (unphosphorylated or phosphorylated form) with ZBTB1 (via BTB domain). Probably part of a corepressor complex containing ZNF304, TRIM28, SETDB1 and DNMT1. Interacts with ATRX. Forms a complex with ATRX, SETDB1 and ZNF274. Interacts with ZFP568; the interaction mediates ZFP568 transcriptional repression activity. Interacts with RRP1B. Interacts with CRY1. Interacts with ZNF263; recruited to the SIX3 promoter along with other proteins involved in chromatin modification and transcriptional corepression where it contributes to transcriptional repression. Interacts with CYREN (via XLF motif). Interacts with TRIM17; this interaction prevents TRIM28 activity. Interacts with ZNF746. Interacts with PHF13. Interacts with ZNF354C. Interacts with ZNF432; the interaction is independent of PARP1. ATM-induced phosphorylation on Ser-824 represses sumoylation leading to the de-repression of expression of a subset of genes involved in cell cycle control and apoptosis in response to genotoxic stress. Dephosphorylation by the phosphatases, PPP1CA and PP1CB forms, allows sumoylation and expression of TRIM28 target genes. Post-translationally, sumoylation/desumoylation events regulate TRIM28-mediated transcriptional repression. Sumoylation is required for interaction with CHD3 and SETDB1 and the corepressor activity. Represses and is repressed by Ser-824 phosphorylation. Enhances the TRIM28 corepressor activity, inhibiting transcriptional activity of a number of genes including GADD45A and CDKN1A/p21. Lys-554, Lys-779 and Lys-804 are the major sites of sumoylation. In response to Dox-induced DNA damage, enhanced phosphorylation on Ser-824 prevents sumoylation and allows de-repression of CDKN1A/p21. In terms of processing, auto-ubiquitinated; enhanced by MAGEA2 and MAGEC2. Citrullinated by PADI4. Post-translationally, ADP-ribosylated by SIRT6, promoting TRIM28/KAP1 interaction with CBX5, thereby contributing to the packaging of LINE-1 retrotransposon elements into transcriptionally repressive heterochromatin.

It is found in the nucleus. It carries out the reaction S-ubiquitinyl-[E2 ubiquitin-conjugating enzyme]-L-cysteine + [acceptor protein]-L-lysine = [E2 ubiquitin-conjugating enzyme]-L-cysteine + N(6)-ubiquitinyl-[acceptor protein]-L-lysine.. It participates in protein modification; protein sumoylation. Functionally, nuclear corepressor for KRAB domain-containing zinc finger proteins (KRAB-ZFPs). Mediates gene silencing by recruiting CHD3, a subunit of the nucleosome remodeling and deacetylation (NuRD) complex, and SETDB1 (which specifically methylates histone H3 at 'Lys-9' (H3K9me)) to the promoter regions of KRAB target genes. Enhances transcriptional repression by coordinating the increase in H3K9me, the decrease in histone H3 'Lys-9 and 'Lys-14' acetylation (H3K9ac and H3K14ac, respectively) and the disposition of HP1 proteins to silence gene expression. Recruitment of SETDB1 induces heterochromatinization. May play a role as a coactivator for CEBPB and NR3C1 in the transcriptional activation of ORM1. Also a corepressor for ERBB4. Inhibits E2F1 activity by stimulating E2F1-HDAC1 complex formation and inhibiting E2F1 acetylation. May serve as a partial backup to prevent E2F1-mediated apoptosis in the absence of RB1. Important regulator of CDKN1A/p21(CIP1). Has E3 SUMO-protein ligase activity toward itself via its PHD-type zinc finger. Specifically sumoylates IRF7, thereby inhibiting its transactivation activity. Ubiquitinates p53/TP53 leading to its proteasomal degradation; the function is enhanced by MAGEC2 and MAGEA2, and possibly MAGEA3 and MAGEA6. Mediates the nuclear localization of KOX1, ZNF268 and ZNF300 transcription factors. Probably forms a corepressor complex required for activated KRAS-mediated promoter hypermethylation and transcriptional silencing of tumor suppressor genes (TSGs) or other tumor-related genes in colorectal cancer (CRC) cells. Required to maintain a transcriptionally repressive state of genes in undifferentiated embryonic stem cells (ESCs). In ESCs, in collaboration with SETDB1, is also required for H3K9me3 and silencing of endogenous and introduced retroviruses in a DNA-methylation independent-pathway. Associates at promoter regions of tumor suppressor genes (TSGs) leading to their gene silencing. The SETDB1-TRIM28-ZNF274 complex may play a role in recruiting ATRX to the 3'-exons of zinc-finger coding genes with atypical chromatin signatures to establish or maintain/protect H3K9me3 at these transcriptionally active regions. Acts as a corepressor for ZFP568. This chain is Transcription intermediary factor 1-beta, found in Mus musculus (Mouse).